A 384-amino-acid polypeptide reads, in one-letter code: 8-amino-7-oxononanoate synthase (384 aa).

Arg-21 contributes to the substrate binding site. 108-109 is a pyridoxal 5'-phosphate binding site; the sequence is GF. His-133 is a binding site for substrate. Pyridoxal 5'-phosphate is bound by residues Ser-179, His-207, and Thr-233. An N6-(pyridoxal phosphate)lysine modification is found at Lys-236. Position 352 (Thr-352) interacts with substrate.

It belongs to the class-II pyridoxal-phosphate-dependent aminotransferase family. BioF subfamily. Homodimer. Requires pyridoxal 5'-phosphate as cofactor.

The enzyme catalyses 6-carboxyhexanoyl-[ACP] + L-alanine + H(+) = (8S)-8-amino-7-oxononanoate + holo-[ACP] + CO2. It functions in the pathway cofactor biosynthesis; biotin biosynthesis. Catalyzes the decarboxylative condensation of pimeloyl-[acyl-carrier protein] and L-alanine to produce 8-amino-7-oxononanoate (AON), [acyl-carrier protein], and carbon dioxide. This Shigella boydii serotype 18 (strain CDC 3083-94 / BS512) protein is 8-amino-7-oxononanoate synthase.